The primary structure comprises 805 residues: DNA gyrase subunit B (805 aa).

The Toprim domain occupies 435-550 (SEIFIVEGDS…RGYIYIAQPP (116 aa)). Mg(2+)-binding residues include E441, D515, and D517.

Belongs to the type II topoisomerase GyrB family. Heterotetramer, composed of two GyrA and two GyrB chains. In the heterotetramer, GyrA contains the active site tyrosine that forms a transient covalent intermediate with DNA, while GyrB binds cofactors and catalyzes ATP hydrolysis. It depends on Mg(2+) as a cofactor. Mn(2+) serves as cofactor. Requires Ca(2+) as cofactor.

The protein resides in the cytoplasm. The enzyme catalyses ATP-dependent breakage, passage and rejoining of double-stranded DNA.. In terms of biological role, a type II topoisomerase that negatively supercoils closed circular double-stranded (ds) DNA in an ATP-dependent manner to modulate DNA topology and maintain chromosomes in an underwound state. Negative supercoiling favors strand separation, and DNA replication, transcription, recombination and repair, all of which involve strand separation. Also able to catalyze the interconversion of other topological isomers of dsDNA rings, including catenanes and knotted rings. Type II topoisomerases break and join 2 DNA strands simultaneously in an ATP-dependent manner. The sequence is that of DNA gyrase subunit B from Caulobacter vibrioides (strain ATCC 19089 / CIP 103742 / CB 15) (Caulobacter crescentus).